The primary structure comprises 148 residues: MPTFKLVLSDPMSGKARQFEIKDPLAQRFIGLKIGDELDGVILKDLIELPKGAKIRITGGSGIEGAPMHPGVPGPVKKYILADGPPGYWPPKKGMKKKKLVRGNTISDSIVQINAVIVYPKDYTGPPAIPLGAKELEKEKKAEEAPAQ.

Belongs to the eukaryotic ribosomal protein eS6 family.

The sequence is that of Small ribosomal subunit protein eS6 from Pyrobaculum aerophilum (strain ATCC 51768 / DSM 7523 / JCM 9630 / CIP 104966 / NBRC 100827 / IM2).